The sequence spans 648 residues: Siderophore transporter MYCGRDRAFT_70577 (648 aa).

Composition is skewed to basic and acidic residues over residues 1–11 (MRTSSESHSRS) and 29–46 (SASKDHHDHDHHHKDTSI). Residues 1–58 (MRTSSESHSRSDAFNGKNDASQVTVDSDSASKDHHDHDHHHKDTSINERQSQHVHQQA) are disordered. Residues 47-58 (NERQSQHVHQQA) show a composition bias toward polar residues. The next 11 helical transmembrane spans lie at 79 to 99 (LLLYVLVASLALTMFAYALDQ), 151 to 171 (VVVLVVYAVGFAVAASSQGLA), 205 to 225 (AFWSGMLATPFLITTFINGFI), 236 to 256 (WGLGMFAIMMPVLLTPAIWTL), 303 to 323 (LIGLLLLGLAFSLILLALNLA), 336 to 356 (IAMLVIGFVILGLFIAYEALL), 409 to 429 (TIFIGTTTLTLCTMSPIGGLI), 438 to 458 (TLMVIGAIIKLIGYGVGLDGN), 468 to 488 (LAVSQVMLGMGAWTVIGARVG), 500 to 520 (VVISVMSLWSTMASSIGSTIA), and 578 to 598 (GIILAVSLVLAAVPVVFSCLM).

Belongs to the major facilitator superfamily.

The protein resides in the cell membrane. Functionally, siderophore transporter; part of the gene cluster 14 that mediates the biosynthesis of a ferrichrome A-like siderophors which may contribute to organismal virulence. The chain is Siderophore transporter MYCGRDRAFT_70577 from Zymoseptoria tritici (strain CBS 115943 / IPO323) (Speckled leaf blotch fungus).